The following is an 876-amino-acid chain: DNA double-strand break repair Rad50 ATPase (876 aa).

ATP contacts are provided by residues Arg-11, 31–37, and Gln-139; that span reads NGAGKTT. 2 coiled-coil regions span residues 188 to 528 and 575 to 710; these read RERV…EDRL and SGVE…RKER. The region spanning 387-484 is the Zinc-hook domain; sequence EETLQSEYEE…RLESVRRELE (98 aa). Residues Cys-432 and Cys-435 each coordinate Zn(2+).

Belongs to the SMC family. RAD50 subfamily. In terms of assembly, homodimer. Forms a heterotetramer composed of two Mre11 subunits and two Rad50 subunits. Zn(2+) is required as a cofactor.

In terms of biological role, part of the Rad50/Mre11 complex, which is involved in the early steps of DNA double-strand break (DSB) repair. The complex may facilitate opening of the processed DNA ends to aid in the recruitment of HerA and NurA. Rad50 controls the balance between DNA end bridging and DNA resection via ATP-dependent structural rearrangements of the Rad50/Mre11 complex. The chain is DNA double-strand break repair Rad50 ATPase from Methanopyrus kandleri (strain AV19 / DSM 6324 / JCM 9639 / NBRC 100938).